The primary structure comprises 507 residues: Cytochrome c-552 (507 aa).

Residues 1-22 (MTKFKLLLAGSLVAIVSMGLLA) form the signal peptide. Positions 102, 130, 133, 134, 168, 171, 172, 211, 214, and 215 each coordinate heme c. Residues Glu-217, Tyr-218, Lys-274, and Gln-276 each contribute to the Ca(2+) site. Tyr-218 contributes to the substrate binding site. His-277 is a substrate binding site. His-288, Cys-295, Cys-298, His-299, His-313, Cys-326, Cys-329, His-330, and His-405 together coordinate heme c.

It belongs to the cytochrome c-552 family. Homodimer. Interacts with NrfH. May form a heterotetramer with NrfH. It depends on Ca(2+) as a cofactor. Heme c is required as a cofactor.

It is found in the periplasm. It catalyses the reaction 6 Fe(III)-[cytochrome c] + NH4(+) + 2 H2O = 6 Fe(II)-[cytochrome c] + nitrite + 8 H(+). Its pathway is nitrogen metabolism; nitrate reduction (assimilation). Catalyzes the reduction of nitrite to ammonia, consuming six electrons in the process. Has very low activity toward hydroxylamine, and even lower activity toward sulfite. Sulfite reductase activity is maximal at neutral pH. This chain is Cytochrome c-552 (nrfA), found in Wolinella succinogenes (strain ATCC 29543 / DSM 1740 / CCUG 13145 / JCM 31913 / LMG 7466 / NCTC 11488 / FDC 602W) (Vibrio succinogenes).